The primary structure comprises 470 residues: Dihydrolipoyl dehydrogenase (470 aa).

FAD is bound by residues 39–47 (EKGNLGGVC), lysine 56, and alanine 119. Cysteine 47 and cysteine 52 are joined by a disulfide. NAD(+)-binding positions include 183-187 (GGGYI), glutamate 206, and 271-274 (TVGR). FAD-binding residues include aspartate 314 and alanine 322. The Proton acceptor role is filled by histidine 446.

The protein belongs to the class-I pyridine nucleotide-disulfide oxidoreductase family. As to quaternary structure, homodimer. Identified in a complex with PdhC. Requires FAD as cofactor.

Its subcellular location is the cytoplasm. The catalysed reaction is N(6)-[(R)-dihydrolipoyl]-L-lysyl-[protein] + NAD(+) = N(6)-[(R)-lipoyl]-L-lysyl-[protein] + NADH + H(+). Lipoamide dehydrogenase is a component of the alpha-ketoacid dehydrogenase complexes. The protein is Dihydrolipoyl dehydrogenase (pdhD) of Geobacillus stearothermophilus (Bacillus stearothermophilus).